The primary structure comprises 216 residues: Protein Syd (216 aa).

Belongs to the Syd family.

It localises to the cell inner membrane. Its function is as follows. Interacts with the SecY protein in vivo. May bind preferentially to an uncomplexed state of SecY, thus functioning either as a chelating agent for excess SecY in the cell or as a regulatory factor that negatively controls the translocase function. This chain is Protein Syd, found in Shewanella sp. (strain MR-7).